Here is a 627-residue protein sequence, read N- to C-terminus: Phosphomethylpyrimidine synthase (627 aa).

Over residues M1–P24 the composition is skewed to polar residues. The segment at M1–V29 is disordered. Substrate contacts are provided by residues N231, M260, Y289, H325, S345–G347, D386–R389, and E425. Residue H429 coordinates Zn(2+). Y452 serves as a coordination point for substrate. Zn(2+) is bound at residue H493. Residues C573, C576, and C581 each coordinate [4Fe-4S] cluster.

It belongs to the ThiC family. As to quaternary structure, homodimer. The cofactor is [4Fe-4S] cluster.

It carries out the reaction 5-amino-1-(5-phospho-beta-D-ribosyl)imidazole + S-adenosyl-L-methionine = 4-amino-2-methyl-5-(phosphooxymethyl)pyrimidine + CO + 5'-deoxyadenosine + formate + L-methionine + 3 H(+). It functions in the pathway cofactor biosynthesis; thiamine diphosphate biosynthesis. Its function is as follows. Catalyzes the synthesis of the hydroxymethylpyrimidine phosphate (HMP-P) moiety of thiamine from aminoimidazole ribotide (AIR) in a radical S-adenosyl-L-methionine (SAM)-dependent reaction. The sequence is that of Phosphomethylpyrimidine synthase from Pseudomonas aeruginosa (strain LESB58).